The primary structure comprises 168 residues: Shikimate kinase (168 aa).

11–16 (GAGKTT) contacts ATP. Threonine 15 lines the Mg(2+) pocket. Residues aspartate 33, arginine 57, and glycine 78 each coordinate substrate. Arginine 118 is an ATP binding site. Arginine 136 is a binding site for substrate. Arginine 153 contacts ATP.

Belongs to the shikimate kinase family. In terms of assembly, monomer. Mg(2+) serves as cofactor.

The protein resides in the cytoplasm. The catalysed reaction is shikimate + ATP = 3-phosphoshikimate + ADP + H(+). The protein operates within metabolic intermediate biosynthesis; chorismate biosynthesis; chorismate from D-erythrose 4-phosphate and phosphoenolpyruvate: step 5/7. In terms of biological role, catalyzes the specific phosphorylation of the 3-hydroxyl group of shikimic acid using ATP as a cosubstrate. This Enterococcus faecalis (strain ATCC 700802 / V583) protein is Shikimate kinase.